Reading from the N-terminus, the 337-residue chain is GDP-fucose transporter, Golgi (337 aa).

The next 8 helical transmembrane spans lie at 13–35, 45–67, 95–117, 121–140, 145–163, 173–192, 205–227, and 242–264; these read NKYLKIFFVVSLYWCTSILTVFV, VNLGAPLFMSWFQCVVSTVICFV, ILPLSVLYTLMIGANNLSLSYVT, YYIGRSLTTVFSVVLTYVIL, SFKCLLCCGAIVVGFWLGV, SWRGTIFGVLSSLALAMFSI, VWLLSYYNNLYSTLLFLPLIIIN, and SWFWAAMTLSGLCGFAIGFVTAL.

It belongs to the TPT transporter family. SLC35C subfamily.

Its subcellular location is the golgi apparatus membrane. Involved in GDP-fucose import from the cytoplasm into the Golgi lumen. Plays a major role in the fucosylation of N-glycans. Functions redundantly with Efr in the O-fucosylation of Notch, positively regulating Notch signaling. The sequence is that of GDP-fucose transporter, Golgi from Drosophila melanogaster (Fruit fly).